Reading from the N-terminus, the 413-residue chain is N-acylneuraminate cytidylyltransferase (413 aa).

This sequence belongs to the CMP-NeuNAc synthase family. Requires Mg(2+) as cofactor. The cofactor is Mn(2+).

Its subcellular location is the cytoplasm. The enzyme catalyses an N-acylneuraminate + CTP = a CMP-N-acyl-beta-neuraminate + diphosphate. In terms of biological role, catalyzes the formation of CMP-N-acetylneuraminic acid (CMP-NeuNAc), which is essential for the formation of the capsule. The protein is N-acylneuraminate cytidylyltransferase (neuA) of Streptococcus agalactiae serotype V (strain ATCC BAA-611 / 2603 V/R).